A 104-amino-acid polypeptide reads, in one-letter code: Transcription factor ILI1 (104 aa).

Residues 1 to 11 (MSSSRRSRSRR) show a composition bias toward basic residues. Positions 1 to 27 (MSSSRRSRSRRAGSSVPSSSSSSRTSI) are disordered. Residues 12 to 27 (AGSSVPSSSSSSRTSI) are compositionally biased toward low complexity. The region spanning 16–71 (VPSSSSSSRTSISEDQIAELLSKLQALLPESQARNGAHRGSAARVLQETCSYIRSL) is the bHLH domain.

This sequence belongs to the bHLH protein family. As to quaternary structure, interacts with IBH1.

In terms of biological role, atypical and probable non DNA-binding bHLH transcription factor that acts as a positive regulator of cell elongation and plant development. Binds the transcription repressor IBH1 and forms a heterodimer of antagonistic bHLH transcription factors that function downstream of BZR1 to mediate brassinosteroid regulation of cell elongation and lamina inclination. The protein is Transcription factor ILI1 (ILI1) of Oryza sativa subsp. indica (Rice).